Here is a 385-residue protein sequence, read N- to C-terminus: UPF0284 protein PMT9312_0438 (385 aa).

Belongs to the UPF0284 family.

The polypeptide is UPF0284 protein PMT9312_0438 (Prochlorococcus marinus (strain MIT 9312)).